We begin with the raw amino-acid sequence, 1337 residues long: Rho GTPase-activating protein 29 (1337 aa).

The segment covering 1–13 (MFRQGSNSGNKRM) has biased composition (polar residues). 4 disordered regions span residues 1 to 20 (MFRQ…ARLS), 369 to 397 (REEY…LEKK), 513 to 551 (SSKT…ADEV), and 564 to 654 (ERRS…TGLS). In terms of domain architecture, F-BAR spans 225 to 488 (EQVDLLLLKN…QAKKYEPGQR (264 aa)). A coiled-coil region spans residues 326 to 443 (LLARKNDLDK…SEILAQIRKL (118 aa)). Positions 369-384 (REEYEKARSSTSRTEE) are enriched in basic and acidic residues. 2 stretches are compositionally biased toward polar residues: residues 525–545 (QNST…SMDN) and 568–579 (NSSIDMQVPRTQ). Positions 596–613 (CSDSESAGGSSESRSMDS) are enriched in low complexity. Residues 676-723 (AHTHKLRKLRAPSKCRECDSLVVFHGAECEECSLACHKKCLETLAIQC) form a Phorbol-ester/DAG-type zinc finger. The Rho-GAP domain maps to 737-950 (IDFAQVVKNS…LLIKHHQMIF (214 aa)). Over residues 960-973 (TSPTVSQASFGSSI) the composition is skewed to polar residues. Disordered regions lie at residues 960–983 (TSPT…LSRH), 1016–1066 (MKTG…AKPV), 1083–1114 (SRNT…TNFY), 1149–1210 (PPSG…KPSD), and 1273–1337 (TVSR…AHFV). Residues 974–983 (QDKESKLSRH) show a composition bias toward basic and acidic residues. A compositionally biased stretch (basic and acidic residues) spans 1083–1092 (SRNTVEHDHS). 2 stretches are compositionally biased toward polar residues: residues 1161–1177 (MASQ…SQSG) and 1295–1310 (VTLS…TEEL). The segment covering 1325–1337 (RMQELEHREAHFV) has biased composition (basic and acidic residues).

Functionally, GTPase activator for the Rho-type GTPases by converting them to an inactive GDP-bound state. Has strong activity toward RHOA, and weaker activity toward RAC1 and CDC42. This is Rho GTPase-activating protein 29 (arhgap29) from Danio rerio (Zebrafish).